Here is a 412-residue protein sequence, read N- to C-terminus: G-protein coupled receptor homolog UL33 (412 aa).

Residues 1–29 (MDTIIHNSTRNNTPPHINDTCNMTGPLFA) lie on the Virion surface side of the membrane. N-linked (GlcNAc...) asparagine; by host glycosylation is found at Asn-7, Asn-18, and Asn-22. The chain crosses the membrane as a helical span at residues 30 to 54 (IRTTEAVLNTFIIFVGGPLNAIVLI). At 55–70 (TQLLTNRVLGYSTPTI) the chain is on the intravirion side. A helical membrane pass occupies residues 71-95 (YMTNLYSTNFLTLTVLPFIVLSNQW). Residues 96 to 102 (LLPAGVA) are Virion surface-facing. The helical transmembrane segment at 103 to 129 (SCKFLSVIYYSSCTVGFATVALIAADR) threads the bilayer. A disulfide bridge connects residues Cys-104 and Cys-188. At 130 to 138 (YRVLHKRTY) the chain is on the intravirion side. Residues 139–160 (ARQSYRSTYMILLLTWLAGLIF) form a helical membrane-spanning segment. Over 161–203 (SVPAAVYTTVVMHHDANDTNNTNGHATCVLYFVAEEVHTVLLS) the chain is Virion surface. Asn-177 and Asn-180 each carry an N-linked (GlcNAc...) asparagine; by host glycan. Residues 204-224 (WKVLLTMVWGAAPVIMMTWFY) traverse the membrane as a helical segment. Topologically, residues 225–240 (AFFYSTVQRTSQKQRS) are intravirion. The helical transmembrane segment at 241–267 (RTLTFVSVLLISFVALQTPYVSLMIFN) threads the bilayer. Residues 268-281 (SYATTAWPMQCEHL) are Virion surface-facing. A helical transmembrane segment spans residues 282–305 (TLRRTIGTLARVVPHLHCLINPIL). Residues 306–412 (YALLGHDFLQ…SQSHHNLSGV (107 aa)) lie on the Intravirion side of the membrane. The tract at residues 377 to 412 (NFPSGTWKGGQKTASNDTSTKIPHRLSQSHHNLSGV) is disordered. Positions 388 to 397 (KTASNDTSTK) are enriched in polar residues.

The protein belongs to the G-protein coupled receptor 1 family. Heterodimerizes with US28.

It localises to the virion. The protein resides in the host cell membrane. The protein localises to the host cytoplasm. Functionally, G-protein-coupled receptor (vGPCR) that constitutively activates multiple oncogenic signaling pathways including STAT3, AP-1, phospholipase C, NF-kappa-B or cAMP-responsive element (CRE) pathways. Plays an important role in viral reactivation from latency through activation of host CREB1, facilitating its recruitment to the viral major immediate early (MIE) genes. In turn, expression of the MIE-driven genes such as UL123 are de-repressed. Also facilitates virus dissemination via the extracellular and cell-to-cell route. This chain is G-protein coupled receptor homolog UL33 (UL33), found in Human cytomegalovirus (strain AD169) (HHV-5).